Consider the following 89-residue polypeptide: Putative protein T-ENOL (89 aa).

Disordered regions lie at residues 1–31 and 54–89; these read MAST…KASL and RSHM…TDTR.

As to expression, specifically expressed in testis (at protein level).

The sequence is that of Putative protein T-ENOL from Rattus norvegicus (Rat).